Here is a 221-residue protein sequence, read N- to C-terminus: Large ribosomal subunit protein uL4 (221 aa).

The segment at 48–77 (TASTKTRGEVSGGGRKPWIQKHTGRARQGS) is disordered.

The protein belongs to the universal ribosomal protein uL4 family. As to quaternary structure, part of the 50S ribosomal subunit.

Functionally, one of the primary rRNA binding proteins, this protein initially binds near the 5'-end of the 23S rRNA. It is important during the early stages of 50S assembly. It makes multiple contacts with different domains of the 23S rRNA in the assembled 50S subunit and ribosome. Its function is as follows. Forms part of the polypeptide exit tunnel. The polypeptide is Large ribosomal subunit protein uL4 (Thermosipho africanus (strain TCF52B)).